Here is a 262-residue protein sequence, read N- to C-terminus: MRVLVSNDDGVDAPGIKILADALRNAGHEVMVVAPDRDRSGASNSLTLDTPIRAKQIDMHTYSVAGTPTDCVHLALTGLLNYDPDIVVSGINNTGNLGDDVIYSGTVSAAMEGRFLGLPAVAVSLVTLCREGQQAPQYETAAHAAINIVAQLKTDPLPADTILNVNVPDVTWQQMRGFKVTRLGNRHRSAPCLTQTDPRGHTIYWIGPAGPEQDAGPGTDFDAVRNTYISITPIHVDLTRYQALENVTRWTDRLTAHMDWPT.

4 residues coordinate a divalent metal cation: Asp-8, Asp-9, Ser-40, and Asn-92.

It belongs to the SurE nucleotidase family. A divalent metal cation is required as a cofactor.

It is found in the cytoplasm. It catalyses the reaction a ribonucleoside 5'-phosphate + H2O = a ribonucleoside + phosphate. Its function is as follows. Nucleotidase that shows phosphatase activity on nucleoside 5'-monophosphates. This chain is 5'-nucleotidase SurE, found in Xylella fastidiosa (strain M23).